We begin with the raw amino-acid sequence, 431 residues long: Probable prephenate dehydrogenase [NADP(+)] (431 aa).

Position 5–34 (5–34) interacts with NADP(+); sequence FQVGIIGFGDMGRLYAEYISKAGWRVNVCD. One can recognise a Prephenate/arogenate dehydrogenase domain in the interval 5–285; that stretch reads FQVGIIGFGD…GENMDRNSSG (281 aa).

It belongs to the prephenate/arogenate dehydrogenase family.

The protein resides in the cytoplasm. It carries out the reaction prephenate + NADP(+) = 3-(4-hydroxyphenyl)pyruvate + CO2 + NADPH. Its pathway is amino-acid biosynthesis; L-tyrosine biosynthesis; (4-hydroxyphenyl)pyruvate from prephenate (NADP(+) route): step 1/1. This chain is Probable prephenate dehydrogenase [NADP(+)] (tyr1), found in Schizosaccharomyces pombe (strain 972 / ATCC 24843) (Fission yeast).